The chain runs to 144 residues: Small ribosomal subunit protein eS12 (144 aa).

It belongs to the eukaryotic ribosomal protein eS12 family.

In Trypanosoma brucei brucei, this protein is Small ribosomal subunit protein eS12 (RPS12).